The primary structure comprises 213 residues: Pyrrolidone-carboxylate peptidase (213 aa).

Catalysis depends on residues E81, C144, and H166.

It belongs to the peptidase C15 family. In terms of assembly, homotetramer.

Its subcellular location is the cytoplasm. It catalyses the reaction Release of an N-terminal pyroglutamyl group from a polypeptide, the second amino acid generally not being Pro.. Its function is as follows. Removes 5-oxoproline from various penultimate amino acid residues except L-proline. This chain is Pyrrolidone-carboxylate peptidase, found in Pseudomonas fluorescens (strain SBW25).